The sequence spans 454 residues: Maintenance of mitochondrial morphology protein 1 (454 aa).

At 1-128 (MSMVIGIGDL…QSSGWGFAHG (128 aa)) the chain is on the lumenal side. The chain crosses the membrane as a helical span at residues 129 to 149 (LLVGQLSVVAVLAFFIKFFIF). Residues 150 to 454 (GNSSMARPLM…SESETAVDSN (305 aa)) lie on the Cytoplasmic side of the membrane. Positions 207-430 (QSESLDWFNV…EPRFQLIELP (224 aa)) constitute an SMP-LTD domain.

Belongs to the MMM1 family. Homodimer. Component of the ER-mitochondria encounter structure (ERMES) or MDM complex, composed of MMM1, MDM10, MDM12 and MDM34. An MMM1 homodimer associates with one molecule of MDM12 on each side in a pairwise head-to-tail manner, and the SMP-LTD domains of MMM1 and MDM12 generate a continuous hydrophobic tunnel for phospholipid trafficking.

Its subcellular location is the endoplasmic reticulum membrane. Its function is as follows. Component of the ERMES/MDM complex, which serves as a molecular tether to connect the endoplasmic reticulum (ER) and mitochondria. Components of this complex are involved in the control of mitochondrial shape and protein biogenesis, and function in nonvesicular lipid trafficking between the ER and mitochondria. The MDM12-MMM1 subcomplex functions in the major beta-barrel assembly pathway that is responsible for biogenesis of all outer membrane beta-barrel proteins, and acts in a late step after the SAM complex. The MDM10-MDM12-MMM1 subcomplex further acts in the TOM40-specific pathway after the action of the MDM12-MMM1 complex. Essential for establishing and maintaining the structure of mitochondria and maintenance of mtDNA nucleoids. The polypeptide is Maintenance of mitochondrial morphology protein 1 (Komagataella phaffii (strain GS115 / ATCC 20864) (Yeast)).